The following is a 929-amino-acid chain: Protocadherin gamma-B7 (929 aa).

The first 30 residues, 1-30 (MGGSCAQRRRAGPRQVLFPLLLPLFYPTLC), serve as a signal peptide directing secretion. 6 Cadherin domains span residues 31-133 (EPIR…APQF), 134-242 (RKDE…PPVF), 243-347 (SQDV…SPEI), 348-452 (IITS…APVF), 453-562 (GQSA…APRV), and 570-675 (DGSA…LPDF). Residues 31–691 (EPIRYSIPEE…SDSQAEMQFY (661 aa)) lie on the Extracellular side of the membrane. N-linked (GlcNAc...) asparagine glycosylation is found at N419 and N545. The helical transmembrane segment at 692 to 712 (LVVALALISVLFLLAVILAIA) threads the bilayer. The Cytoplasmic portion of the chain corresponds to 713-929 (LRLRQSFSPT…KKKSGKKEKK (217 aa)). Disordered regions lie at residues 806–838 (QAPP…WPNN) and 899–929 (ATLT…KEKK). Polar residues predominate over residues 807–838 (APPNTDWRFSQAQRPGTSGSQNGDDTGTWPNN). Basic residues predominate over residues 919-929 (NKKKSGKKEKK).

Its subcellular location is the cell membrane. Functionally, potential calcium-dependent cell-adhesion protein. May be involved in the establishment and maintenance of specific neuronal connections in the brain. The sequence is that of Protocadherin gamma-B7 (PCDHGB7) from Homo sapiens (Human).